Reading from the N-terminus, the 503-residue chain is Putative (R)-citramalate synthase CimA (503 aa).

Residues 9 to 257 form the Pyruvate carboxyltransferase domain; it reads IRFFDTTLRD…DTGIATEELY (249 aa).

It belongs to the alpha-IPM synthase/homocitrate synthase family. Homodimer.

The enzyme catalyses pyruvate + acetyl-CoA + H2O = (3R)-citramalate + CoA + H(+). It functions in the pathway amino-acid biosynthesis; L-isoleucine biosynthesis; 2-oxobutanoate from pyruvate: step 1/3. Functionally, catalyzes the condensation of pyruvate and acetyl-coenzyme A to form (R)-citramalate. In Methanoculleus marisnigri (strain ATCC 35101 / DSM 1498 / JR1), this protein is Putative (R)-citramalate synthase CimA.